Consider the following 329-residue polypeptide: UDP-3-O-acylglucosamine N-acyltransferase (329 aa).

His224 serves as the catalytic Proton acceptor.

This sequence belongs to the transferase hexapeptide repeat family. LpxD subfamily. Homotrimer.

The catalysed reaction is a UDP-3-O-[(3R)-3-hydroxyacyl]-alpha-D-glucosamine + a (3R)-hydroxyacyl-[ACP] = a UDP-2-N,3-O-bis[(3R)-3-hydroxyacyl]-alpha-D-glucosamine + holo-[ACP] + H(+). It functions in the pathway bacterial outer membrane biogenesis; LPS lipid A biosynthesis. Functionally, catalyzes the N-acylation of UDP-3-O-acylglucosamine using 3-hydroxyacyl-ACP as the acyl donor. Is involved in the biosynthesis of lipid A, a phosphorylated glycolipid that anchors the lipopolysaccharide to the outer membrane of the cell. The protein is UDP-3-O-acylglucosamine N-acyltransferase of Albidiferax ferrireducens (strain ATCC BAA-621 / DSM 15236 / T118) (Rhodoferax ferrireducens).